A 410-amino-acid chain; its full sequence is Dual-specificity RNA methyltransferase RlmN (410 aa).

The Proton acceptor role is filled by Glu123. Residues 129 to 378 (EEGRGTLCIS…IRTPRGRDIL (250 aa)) form the Radical SAM core domain. The cysteines at positions 136 and 381 are disulfide-linked. [4Fe-4S] cluster contacts are provided by Cys143, Cys147, and Cys150. Residues 207-208 (GE), Ser239, 261-263 (SLH), and Asn338 contribute to the S-adenosyl-L-methionine site. Cys381 functions as the S-methylcysteine intermediate in the catalytic mechanism.

The protein belongs to the radical SAM superfamily. RlmN family. The cofactor is [4Fe-4S] cluster.

The protein resides in the cytoplasm. The catalysed reaction is adenosine(2503) in 23S rRNA + 2 reduced [2Fe-2S]-[ferredoxin] + 2 S-adenosyl-L-methionine = 2-methyladenosine(2503) in 23S rRNA + 5'-deoxyadenosine + L-methionine + 2 oxidized [2Fe-2S]-[ferredoxin] + S-adenosyl-L-homocysteine. It carries out the reaction adenosine(37) in tRNA + 2 reduced [2Fe-2S]-[ferredoxin] + 2 S-adenosyl-L-methionine = 2-methyladenosine(37) in tRNA + 5'-deoxyadenosine + L-methionine + 2 oxidized [2Fe-2S]-[ferredoxin] + S-adenosyl-L-homocysteine. Its function is as follows. Specifically methylates position 2 of adenine 2503 in 23S rRNA and position 2 of adenine 37 in tRNAs. m2A2503 modification seems to play a crucial role in the proofreading step occurring at the peptidyl transferase center and thus would serve to optimize ribosomal fidelity. The polypeptide is Dual-specificity RNA methyltransferase RlmN (Mesorhizobium japonicum (strain LMG 29417 / CECT 9101 / MAFF 303099) (Mesorhizobium loti (strain MAFF 303099))).